A 196-amino-acid polypeptide reads, in one-letter code: Probable nicotinate-nucleotide adenylyltransferase (196 aa).

The protein belongs to the NadD family.

The catalysed reaction is nicotinate beta-D-ribonucleotide + ATP + H(+) = deamido-NAD(+) + diphosphate. It functions in the pathway cofactor biosynthesis; NAD(+) biosynthesis; deamido-NAD(+) from nicotinate D-ribonucleotide: step 1/1. In terms of biological role, catalyzes the reversible adenylation of nicotinate mononucleotide (NaMN) to nicotinic acid adenine dinucleotide (NaAD). The protein is Probable nicotinate-nucleotide adenylyltransferase of Thermotoga sp. (strain RQ2).